The primary structure comprises 141 residues: Galactose-6-phosphate isomerase subunit LacA (141 aa).

The protein belongs to the LacAB/RpiB family. In terms of assembly, heteromultimeric protein consisting of LacA and LacB.

The catalysed reaction is aldehydo-D-galactose 6-phosphate = keto-D-tagatose 6-phosphate. It functions in the pathway carbohydrate metabolism; D-galactose 6-phosphate degradation; D-tagatose 6-phosphate from D-galactose 6-phosphate: step 1/1. This is Galactose-6-phosphate isomerase subunit LacA from Streptococcus pneumoniae serotype 2 (strain D39 / NCTC 7466).